Here is a 1222-residue protein sequence, read N- to C-terminus: PAN2-PAN3 deadenylation complex catalytic subunit PAN2 (1222 aa).

WD repeat units lie at residues 104-143 and 276-315; these read PEMTELRCMSFTAQPHKIIVAGLQSAMFIIDVEKGAIVDQ and ANVAFMLGLEVSPSGEALAINDAECSIHLWGSPSKIHFNE. Residues 316–451 form a linker region; it reads IGKETEFSDI…GLKINGETKE (136 aa). The 370-residue stretch at 452 to 821 folds into the USP domain; that stretch reads DPLLKYSNVE…SPCTLAYQIS (370 aa). Positions 871-1027 constitute an Exonuclease domain; the sequence is ALDTEFVDLE…WAVFKEYIQE (157 aa). A divalent metal cation-binding residues include aspartate 873, glutamate 875, and aspartate 982. The interval 1035–1067 is disordered; sequence TSITTTTNPNIHDANTSTTTTTAITTTPPEGHD. Positions 1050–1061 are enriched in low complexity; the sequence is TSTTTTTAITTT. Residue aspartate 1071 coordinates a divalent metal cation. 2 disordered regions span residues 1110 to 1152 and 1167 to 1222; these read PARY…LSGR and ASVT…SPMR. Positions 1119 to 1133 are enriched in low complexity; sequence PNPNNNNINNGVNPN. Residues 1134-1144 are compositionally biased toward polar residues; it reads GLSTPGSTNPI. Over residues 1180–1191 the composition is skewed to low complexity; that stretch reads NGSMSGSTPSTP. Over residues 1207–1216 the composition is skewed to gly residues; that stretch reads SFGGAKGLTF.

This sequence belongs to the peptidase C19 family. PAN2 subfamily. As to quaternary structure, forms a heterotrimer with an asymmetric homodimer of the regulatory subunit PAN3 to form the poly(A)-nuclease (PAN) deadenylation complex. A divalent metal cation serves as cofactor.

It localises to the cytoplasm. The enzyme catalyses Exonucleolytic cleavage of poly(A) to 5'-AMP.. With respect to regulation, positively regulated by the regulatory subunit PAN3. Functionally, catalytic subunit of the poly(A)-nuclease (PAN) deadenylation complex, one of two cytoplasmic mRNA deadenylases involved in mRNA turnover. PAN specifically shortens poly(A) tails of RNA and the activity is stimulated by poly(A)-binding protein PAB1. PAN deadenylation is followed by rapid degradation of the shortened mRNA tails by the CCR4-NOT complex. Deadenylated mRNAs are then degraded by two alternative mechanisms, namely exosome-mediated 3'-5' exonucleolytic degradation, or deadenylation-dependent mRNA decaping and subsequent 5'-3' exonucleolytic degradation by XRN1. May also be involved in post-transcriptional maturation of mRNA poly(A) tails. In Coccidioides immitis (strain RS) (Valley fever fungus), this protein is PAN2-PAN3 deadenylation complex catalytic subunit PAN2.